Consider the following 129-residue polypeptide: Large-conductance mechanosensitive channel (129 aa).

A run of 3 helical transmembrane segments spans residues 8-28 (FAFR…AAFS), 30-50 (IIKS…IGGI), and 67-87 (GQFL…FLFV).

This sequence belongs to the MscL family. In terms of assembly, homopentamer.

The protein resides in the cell membrane. Its function is as follows. Channel that opens in response to stretch forces in the membrane lipid bilayer. May participate in the regulation of osmotic pressure changes within the cell. The polypeptide is Large-conductance mechanosensitive channel (Exiguobacterium sibiricum (strain DSM 17290 / CCUG 55495 / CIP 109462 / JCM 13490 / 255-15)).